The following is a 194-amino-acid chain: ATP-dependent Clp protease proteolytic subunit 1 (194 aa).

The active-site Nucleophile is Ser98. Residue His123 is part of the active site.

This sequence belongs to the peptidase S14 family. As to quaternary structure, fourteen ClpP subunits assemble into 2 heptameric rings which stack back to back to give a disk-like structure with a central cavity, resembling the structure of eukaryotic proteasomes.

The protein localises to the cytoplasm. It catalyses the reaction Hydrolysis of proteins to small peptides in the presence of ATP and magnesium. alpha-casein is the usual test substrate. In the absence of ATP, only oligopeptides shorter than five residues are hydrolyzed (such as succinyl-Leu-Tyr-|-NHMec, and Leu-Tyr-Leu-|-Tyr-Trp, in which cleavage of the -Tyr-|-Leu- and -Tyr-|-Trp bonds also occurs).. In terms of biological role, cleaves peptides in various proteins in a process that requires ATP hydrolysis. Has a chymotrypsin-like activity. Plays a major role in the degradation of misfolded proteins. ClpXP1 is involved in the complete degradation of the Site-2 clipped anti-sigma-W factor RsiW. This results in the release of SigW and the transcription activation of the genes under the control of the sigma-W factor. The polypeptide is ATP-dependent Clp protease proteolytic subunit 1 (Halalkalibacterium halodurans (strain ATCC BAA-125 / DSM 18197 / FERM 7344 / JCM 9153 / C-125) (Bacillus halodurans)).